The chain runs to 245 residues: Fumarate reductase iron-sulfur subunit (245 aa).

Residues 17 to 98 (PQSAVNKPHF…NGVITLMPMP (82 aa)) enclose the 2Fe-2S ferredoxin-type domain. 4 residues coordinate [2Fe-2S] cluster: Cys-60, Cys-65, Cys-68, and Cys-80. Residues 145–174 (AQEVFELDRCIECGCCIASCGTKLMRPNFI) form the 4Fe-4S ferredoxin-type domain. [4Fe-4S] cluster contacts are provided by Cys-154, Cys-157, and Cys-160. Cys-164, Cys-211, and Cys-217 together coordinate [3Fe-4S] cluster. Cys-221 is a binding site for [4Fe-4S] cluster.

The protein belongs to the succinate dehydrogenase/fumarate reductase iron-sulfur protein family. As to quaternary structure, part of an enzyme complex containing three subunits: a flavoprotein (frdA), an iron-sulfur protein (frdB), and diheme cytochrome b (frdC). [2Fe-2S] cluster serves as cofactor. It depends on [3Fe-4S] cluster as a cofactor. Requires [4Fe-4S] cluster as cofactor.

It carries out the reaction a menaquinone + succinate = a menaquinol + fumarate. In Helicobacter pylori (strain J99 / ATCC 700824) (Campylobacter pylori J99), this protein is Fumarate reductase iron-sulfur subunit (frdB).